A 177-amino-acid chain; its full sequence is MSRVAKNPVAIPAKVEVVLSSDNIAVSGPLGKLSLPLSGDVAIERDGDNLTFAAASESQHARAMSGTLRSLVFNMVTGVSQGFTRKLTLLGVGYKAQAQGANLNLDLGFSHPVSHKMPDGVTVQTPSPTEIVLTGADKQVVGQVAAQIRAYRAPEPYKGKGVRYADEVVIIKETKKK.

It belongs to the universal ribosomal protein uL6 family. Part of the 50S ribosomal subunit.

This protein binds to the 23S rRNA, and is important in its secondary structure. It is located near the subunit interface in the base of the L7/L12 stalk, and near the tRNA binding site of the peptidyltransferase center. This Methylobacillus flagellatus (strain ATCC 51484 / DSM 6875 / VKM B-1610 / KT) protein is Large ribosomal subunit protein uL6.